An 86-amino-acid polypeptide reads, in one-letter code: Small muscular protein (86 aa).

Residues 20–64 are disordered; sequence MGAFRPGAGQPPRRKECTPEVEEGVPPTSDEEKKPIPGAKKLPGP.

This sequence belongs to the SMPX family.

In terms of biological role, plays a role in the regulatory network through which muscle cells coordinate their structural and functional states during growth, adaptation, and repair. This is Small muscular protein (SMPX) from Pongo abelii (Sumatran orangutan).